A 237-amino-acid chain; its full sequence is Ribonuclease 3 (237 aa).

Residues 5–136 (VDELSARLGV…VIAALFLDQG (132 aa)) enclose the RNase III domain. Glutamate 49 is a binding site for Mg(2+). The active site involves aspartate 53. Mg(2+) is bound by residues aspartate 122 and glutamate 125. Glutamate 125 is a catalytic residue. Residues 163–232 (DYKSRLQARI…ARAALDALEG (70 aa)) enclose the DRBM domain. Over residues 185–208 (IDRSGPEHRPEFTVEVRAGEERLG) the composition is skewed to basic and acidic residues. The segment at 185–237 (IDRSGPEHRPEFTVEVRAGEERLGTGKGPSKQAAEQAAARAALDALEGGTDGR) is disordered. A compositionally biased stretch (low complexity) spans 216–231 (QAAEQAAARAALDALE).

The protein belongs to the ribonuclease III family. As to quaternary structure, homodimer. It depends on Mg(2+) as a cofactor.

The protein resides in the cytoplasm. The catalysed reaction is Endonucleolytic cleavage to 5'-phosphomonoester.. Functionally, digests double-stranded RNA. Involved in the processing of primary rRNA transcript to yield the immediate precursors to the large and small rRNAs (23S and 16S). Processes some mRNAs, and tRNAs when they are encoded in the rRNA operon. Processes pre-crRNA and tracrRNA of type II CRISPR loci if present in the organism. In Roseiflexus sp. (strain RS-1), this protein is Ribonuclease 3.